A 372-amino-acid chain; its full sequence is MIFPWKCQSTQRDLCNIFKLWGWTMLCCDFLAHHGTDCWTYHYSEKPMNWQRARRFCRENYTDLVAIQNKAEIEYLEKTLPFSRSYYWIGIRKIGGIWTWVGTNKSLTEEAENWGDGEPNNKKNKEDCVEIYIKRNKDAGKWNDDACHKLKAALCYTASCQPWSCSGHGECVEIINNYTCNCDVGYYGPQCQFVIQCEPLEAPELGTMDCTHPLGNFSFSSQCAFNCSEGTNLTGIEETTCGPFGNWSSPEPTCQVIQCEPLSAPDLGIMNCSHPLASFSFTSACTFICSEGTELIGKKKTICESSGIWSNPSPICQKLDKSFSMIKEGDYNPLFIPVAVMVTAFSGLAFIIWLARRLKKGKKSKKSMDDPY.

Residues 1–28 (MIFPWKCQSTQRDLCNIFKLWGWTMLCC) form the signal peptide. Positions 29–38 (DFLAHHGTDC) are excised as a propeptide. The Extracellular segment spans residues 39 to 332 (WTYHYSEKPM…FSMIKEGDYN (294 aa)). One can recognise a C-type lectin domain in the interval 55 to 155 (RFCRENYTDL…ACHKLKAALC (101 aa)). Intrachain disulfides connect cysteine 57–cysteine 155, cysteine 128–cysteine 147, cysteine 128–cysteine 160, cysteine 160–cysteine 171, cysteine 165–cysteine 180, cysteine 182–cysteine 191, cysteine 197–cysteine 241, cysteine 227–cysteine 254, cysteine 259–cysteine 303, and cysteine 289–cysteine 316. N-linked (GlcNAc...) asparagine glycans are attached at residues asparagine 60 and asparagine 104. 5 residues coordinate Ca(2+): glutamate 118, asparagine 120, glutamate 126, asparagine 143, and aspartate 144. The 37-residue stretch at 156 to 192 (YTASCQPWSCSGHGECVEIINNYTCNCDVGYYGPQCQ) folds into the EGF-like domain. Asparagine 177 is a glycosylation site (N-linked (GlcNAc...) asparagine). 2 Sushi domains span residues 195–256 (IQCE…TCQV) and 257–318 (IQCE…ICQK). N-linked (GlcNAc...) asparagine glycans are attached at residues asparagine 216, asparagine 226, asparagine 232, asparagine 246, and asparagine 271. Residues 333–355 (PLFIPVAVMVTAFSGLAFIIWLA) form a helical membrane-spanning segment. The Cytoplasmic portion of the chain corresponds to 356-372 (RRLKKGKKSKKSMDDPY).

This sequence belongs to the selectin/LECAM family. Interaction with SELPLG/PSGL1 and PODXL2 is required for promoting recruitment and rolling of leukocytes. This interaction is dependent on the sialyl Lewis X glycan modification of SELPLG and PODXL2, and tyrosine sulfation modifications of SELPLG. Sulfation on 'Tyr-51' of SELPLG is important for L-selectin binding. N-glycosylated.

The protein resides in the cell membrane. Functionally, calcium-dependent lectin that mediates cell adhesion by binding to glycoproteins on neighboring cells. Mediates the adherence of lymphocytes to endothelial cells of high endothelial venules in peripheral lymph nodes. Promotes initial tethering and rolling of leukocytes in endothelia. The sequence is that of L-selectin (SELL) from Pongo pygmaeus (Bornean orangutan).